The sequence spans 279 residues: Acetylglutamate kinase (279 aa).

Substrate is bound by residues 64 to 65, Arg-86, and Asn-177; that span reads GG.

This sequence belongs to the acetylglutamate kinase family. ArgB subfamily.

It localises to the cytoplasm. The enzyme catalyses N-acetyl-L-glutamate + ATP = N-acetyl-L-glutamyl 5-phosphate + ADP. Its pathway is amino-acid biosynthesis; L-arginine biosynthesis; N(2)-acetyl-L-ornithine from L-glutamate: step 2/4. In terms of biological role, catalyzes the ATP-dependent phosphorylation of N-acetyl-L-glutamate. The chain is Acetylglutamate kinase from Campylobacter jejuni subsp. doylei (strain ATCC BAA-1458 / RM4099 / 269.97).